Consider the following 278-residue polypeptide: Large ribosomal subunit protein uL2 (278 aa).

The disordered stretch occupies residues 223–278; it reads GSVMNPNDHPHGGGEGKAPIGHPSPMSPWGKKTLGKKTRDHKAKSEKFIVRHRRAK. The segment covering 255–264 has biased composition (basic residues); the sequence is TLGKKTRDHK.

Belongs to the universal ribosomal protein uL2 family. As to quaternary structure, part of the 50S ribosomal subunit. Forms a bridge to the 30S subunit in the 70S ribosome.

Functionally, one of the primary rRNA binding proteins. Required for association of the 30S and 50S subunits to form the 70S ribosome, for tRNA binding and peptide bond formation. It has been suggested to have peptidyltransferase activity; this is somewhat controversial. Makes several contacts with the 16S rRNA in the 70S ribosome. The protein is Large ribosomal subunit protein uL2 of Lacticaseibacillus paracasei (strain ATCC 334 / BCRC 17002 / CCUG 31169 / CIP 107868 / KCTC 3260 / NRRL B-441) (Lactobacillus paracasei).